Here is a 250-residue protein sequence, read N- to C-terminus: UDP-2,3-diacylglucosamine hydrolase (250 aa).

5 residues coordinate Mn(2+): Asp-8, His-10, Asp-41, Asn-79, and His-114. 79–80 (NR) serves as a coordination point for substrate. Substrate contacts are provided by Asp-122, Ser-160, Asp-172, Gln-175, and His-203. Positions 203 and 205 each coordinate Mn(2+).

Belongs to the LpxH family. Mn(2+) is required as a cofactor.

The protein localises to the cell inner membrane. It catalyses the reaction UDP-2-N,3-O-bis[(3R)-3-hydroxytetradecanoyl]-alpha-D-glucosamine + H2O = 2-N,3-O-bis[(3R)-3-hydroxytetradecanoyl]-alpha-D-glucosaminyl 1-phosphate + UMP + 2 H(+). Its pathway is glycolipid biosynthesis; lipid IV(A) biosynthesis; lipid IV(A) from (3R)-3-hydroxytetradecanoyl-[acyl-carrier-protein] and UDP-N-acetyl-alpha-D-glucosamine: step 4/6. Hydrolyzes the pyrophosphate bond of UDP-2,3-diacylglucosamine to yield 2,3-diacylglucosamine 1-phosphate (lipid X) and UMP by catalyzing the attack of water at the alpha-P atom. Involved in the biosynthesis of lipid A, a phosphorylated glycolipid that anchors the lipopolysaccharide to the outer membrane of the cell. The protein is UDP-2,3-diacylglucosamine hydrolase of Xylella fastidiosa (strain M23).